The primary structure comprises 204 residues: Adenylyl-sulfate kinase (204 aa).

34-41 (GLSGSGKS) contacts ATP. Catalysis depends on Ser-108, which acts as the Phosphoserine intermediate.

This sequence belongs to the APS kinase family.

It catalyses the reaction adenosine 5'-phosphosulfate + ATP = 3'-phosphoadenylyl sulfate + ADP + H(+). The protein operates within sulfur metabolism; hydrogen sulfide biosynthesis; sulfite from sulfate: step 2/3. Catalyzes the synthesis of activated sulfate. In Phocaeicola vulgatus (strain ATCC 8482 / DSM 1447 / JCM 5826 / CCUG 4940 / NBRC 14291 / NCTC 11154) (Bacteroides vulgatus), this protein is Adenylyl-sulfate kinase.